A 773-amino-acid polypeptide reads, in one-letter code: C-Maf-inducing protein (773 aa).

Residues 1-28 (MDVTSSSGGGDPRQIEETKPLLGSDVSG) are disordered. In terms of domain architecture, PH spans 54–163 (LLQEGDIQVC…HSLQWKKKIY (110 aa)). Residues S349, S377, S382, and S660 each carry the phosphoserine modification. LRR repeat units lie at residues 663 to 686 (NLEN…IKLP), 687 to 707 (SLKQ…RLLS), 712 to 732 (MLQV…LALS), and 736 to 756 (SLCS…EDLK).

As to quaternary structure, interacts with FLNA.

The protein resides in the nucleus. The protein localises to the cytoplasm. Plays a role in T-cell signaling pathway. In Mus musculus (Mouse), this protein is C-Maf-inducing protein (Cmip).